A 101-amino-acid polypeptide reads, in one-letter code: Small ribosomal subunit protein uS14 (101 aa).

Basic and acidic residues predominate over residues 1–10; the sequence is MAKKSSIEKN. Residues 1-23 form a disordered region; the sequence is MAKKSSIEKNNRRKRMVKNAAPK.

It belongs to the universal ribosomal protein uS14 family. Part of the 30S ribosomal subunit. Contacts proteins S3 and S10.

Its function is as follows. Binds 16S rRNA, required for the assembly of 30S particles and may also be responsible for determining the conformation of the 16S rRNA at the A site. This is Small ribosomal subunit protein uS14 from Bradyrhizobium diazoefficiens (strain JCM 10833 / BCRC 13528 / IAM 13628 / NBRC 14792 / USDA 110).